The sequence spans 172 residues: Adenine phosphoribosyltransferase (172 aa).

This sequence belongs to the purine/pyrimidine phosphoribosyltransferase family. In terms of assembly, homodimer.

It is found in the cytoplasm. It catalyses the reaction AMP + diphosphate = 5-phospho-alpha-D-ribose 1-diphosphate + adenine. It participates in purine metabolism; AMP biosynthesis via salvage pathway; AMP from adenine: step 1/1. In terms of biological role, catalyzes a salvage reaction resulting in the formation of AMP, that is energically less costly than de novo synthesis. This is Adenine phosphoribosyltransferase from Ligilactobacillus salivarius (strain UCC118) (Lactobacillus salivarius).